A 306-amino-acid chain; its full sequence is Serrate RNA effector molecule homolog (306 aa).

Residues 1-28 are disordered; it reads HKEEELLGSSGGPPPEEPPKEGNPAEIN. Phosphothreonine is present on T101. A Phosphoserine modification is found at S109. Residues 251-284 form a disordered region; it reads GPPYPHGPYGAGRGNYDAFRGQGGYPGKPRNRMV. Omega-N-methylarginine is present on residues R263, R270, and R280.

This sequence belongs to the ARS2 family. As to quaternary structure, interacts with CASP8AP2, ERBB4, NCBP1/CBP80 and DROSHA. Interacts with LUZP4. Interacts with NCBP2/CBP20 and NCBP3.

The protein resides in the nucleus. It is found in the nucleoplasm. Its subcellular location is the cytoplasm. Its function is as follows. Acts as a mediator between the cap-binding complex (CBC) and the primary microRNAs (miRNAs) processing machinery during cell proliferation. Contributes to the stability and delivery of capped primary miRNA transcripts to the primary miRNA processing complex containing DGCR8 and DROSHA, thereby playing a role in RNA-mediated gene silencing (RNAi) by miRNAs. Binds capped RNAs (m7GpppG-capped RNA); however interaction is probably mediated via its interaction with NCBP1/CBP80 component of the CBC complex. Involved in cell cycle progression at S phase. Does not directly confer arsenite resistance but rather modulates arsenic sensitivity. Independently of its activity on miRNAs, necessary and sufficient to promote neural stem cell self-renewal. Does so by directly binding SOX2 promoter and positively regulating its transcription. In Cricetulus griseus (Chinese hamster), this protein is Serrate RNA effector molecule homolog (SRRT).